The following is a 292-amino-acid chain: Non-homologous end joining protein Ku (292 aa).

Residues 12–196 form the Ku domain; the sequence is KLSLVTCPVV…KITKDMVELA (185 aa). The tract at residues 231–292 is disordered; the sequence is KPIKLPEPEE…RSAARQRKAG (62 aa). Over residues 271 to 292 the composition is skewed to basic residues; that stretch reads APAHRRPAKKAHRSAARQRKAG.

The protein belongs to the prokaryotic Ku family. In terms of assembly, homodimer. Interacts with LigD.

With LigD forms a non-homologous end joining (NHEJ) DNA repair enzyme, which repairs dsDNA breaks with reduced fidelity. Binds linear dsDNA with 5'- and 3'- overhangs but not closed circular dsDNA nor ssDNA. Recruits and stimulates the ligase activity of LigD. The sequence is that of Non-homologous end joining protein Ku from Bradyrhizobium sp. (strain ORS 278).